Reading from the N-terminus, the 201-residue chain is Protein LIGHT-DEPENDENT SHORT HYPOCOTYLS 2 (201 aa).

Residues 1 to 14 (MDLISQNHNNRNPN) are compositionally biased toward polar residues. Disordered regions lie at residues 1 to 37 (MDLISQNHNNRNPNTSLSTQTPSSFSSPPSSSRYENQ) and 151 to 201 (SRGV…GATQ). Residues 15 to 32 (TSLSTQTPSSFSSPPSSS) are compositionally biased toward low complexity. The region spanning 33 to 160 (RYENQKRRDW…SRGVSYEKKR (128 aa)) is the ALOG domain. A Nuclear localization signal motif is present at residues 158–162 (KKRKR).

The protein belongs to the plant homeotic and developmental regulators ALOG protein family.

The protein localises to the nucleus. Probable transcription regulator that acts as a developmental regulator by promoting cell growth in response to light. The protein is Protein LIGHT-DEPENDENT SHORT HYPOCOTYLS 2 (LSH2) of Arabidopsis thaliana (Mouse-ear cress).